We begin with the raw amino-acid sequence, 271 residues long: Urease accessory protein UreD (271 aa).

Belongs to the UreD family. In terms of assembly, ureD, UreF and UreG form a complex that acts as a GTP-hydrolysis-dependent molecular chaperone, activating the urease apoprotein by helping to assemble the nickel containing metallocenter of UreC. The UreE protein probably delivers the nickel.

The protein resides in the cytoplasm. Functionally, required for maturation of urease via the functional incorporation of the urease nickel metallocenter. The sequence is that of Urease accessory protein UreD from Azorhizobium caulinodans (strain ATCC 43989 / DSM 5975 / JCM 20966 / LMG 6465 / NBRC 14845 / NCIMB 13405 / ORS 571).